A 734-amino-acid chain; its full sequence is Photosystem I P700 chlorophyll a apoprotein A2 (734 aa).

Helical transmembrane passes span 46-69 (IFASHFGQLAIIFLWTSGNLFHVA), 135-158 (LYTGALFLLFLSAISLIAGWLHLQ), 175-199 (LNHHLSGLFGVSSLAWTGHLVHVAI), 273-291 (MAHHHLAIAFIFLVAGHMY), 330-353 (IHFQLGLALASLGVITSLVAQHMY), 369-395 (AALYTHHQYIAGFIMTGAFAHGAIFFI), 417-439 (AIKSHLSWASLFLGFHTLGLYVH), and 517-535 (FLVHHAIALGLHTTTLILV). Residues cysteine 559 and cysteine 568 each contribute to the [4Fe-4S] cluster site. The next 2 membrane-spanning stretches (helical) occupy residues 575–596 (AFYLAVFWMLNTIGWVTFYWHW) and 643–665 (LSVWAWMFLFGHLVWATGFMFLI). 3 residues coordinate chlorophyll a: histidine 654, methionine 662, and tyrosine 670. Tryptophan 671 serves as a coordination point for phylloquinone. Residues 707–727 (LVGLAHFSVGYIFTYAAFLIA) form a helical membrane-spanning segment.

The protein belongs to the PsaA/PsaB family. As to quaternary structure, the PsaA/B heterodimer binds the P700 chlorophyll special pair and subsequent electron acceptors. PSI consists of a core antenna complex that captures photons, and an electron transfer chain that converts photonic excitation into a charge separation. The eukaryotic PSI reaction center is composed of at least 11 subunits. It depends on P700 is a chlorophyll a/chlorophyll a' dimer, A0 is one or more chlorophyll a, A1 is one or both phylloquinones and FX is a shared 4Fe-4S iron-sulfur center. as a cofactor.

The protein localises to the plastid. The protein resides in the chloroplast thylakoid membrane. It carries out the reaction reduced [plastocyanin] + hnu + oxidized [2Fe-2S]-[ferredoxin] = oxidized [plastocyanin] + reduced [2Fe-2S]-[ferredoxin]. PsaA and PsaB bind P700, the primary electron donor of photosystem I (PSI), as well as the electron acceptors A0, A1 and FX. PSI is a plastocyanin-ferredoxin oxidoreductase, converting photonic excitation into a charge separation, which transfers an electron from the donor P700 chlorophyll pair to the spectroscopically characterized acceptors A0, A1, FX, FA and FB in turn. Oxidized P700 is reduced on the lumenal side of the thylakoid membrane by plastocyanin. This chain is Photosystem I P700 chlorophyll a apoprotein A2, found in Chloranthus spicatus (Chulantree).